The chain runs to 306 residues: Non-specific ribonucleoside hydrolase RihC (306 aa).

Residue H235 is part of the active site.

It belongs to the IUNH family. RihC subfamily.

Functionally, hydrolyzes both purine and pyrimidine ribonucleosides with a broad-substrate specificity. In Salmonella schwarzengrund (strain CVM19633), this protein is Non-specific ribonucleoside hydrolase RihC.